Reading from the N-terminus, the 579-residue chain is UPF0324 membrane protein DVU_2133 (579 aa).

11 consecutive transmembrane segments (helical) span residues 26–45, 193–215, 225–243, 250–272, 305–327, 369–391, 401–423, 436–456, 476–495, 515–534, and 549–571; these read YWAI…LFLA, PFNI…AVGM, FLVG…LMMG, YWGI…TVGT, IGIP…TFIF, LTLA…PAFI, GGAW…AFLG, IQNV…CARV, FVLG…GSLG, LRNW…TNFR, and YVAG…FYIV.

Belongs to the UPF0324 family.

It localises to the cell membrane. The polypeptide is UPF0324 membrane protein DVU_2133 (Nitratidesulfovibrio vulgaris (strain ATCC 29579 / DSM 644 / CCUG 34227 / NCIMB 8303 / VKM B-1760 / Hildenborough) (Desulfovibrio vulgaris)).